A 201-amino-acid polypeptide reads, in one-letter code: MNYLKNIFYWSKLNYDEQQKILSRPILNRNHTVKDTVKKVIENVKNFGDNALRKYSILFDKFNVNEFRIPEEKIISSFLNINENLKSSILIAKKNITSFHEAQILSTIDIETQIGVRCQQVYLPLNSVGIYIPNGTTSLFSSVLMLAIPAKIAGCKEIILCSPPPINNNILYASYVCGIKKIFQVGGAQAIAALAFGTETI.

Belongs to the histidinol dehydrogenase family. Homodimer. The cofactor is Zn(2+).

It catalyses the reaction L-histidinol + 2 NAD(+) + H2O = L-histidine + 2 NADH + 3 H(+). It functions in the pathway amino-acid biosynthesis; L-histidine biosynthesis; L-histidine from 5-phospho-alpha-D-ribose 1-diphosphate: step 9/9. Its function is as follows. Catalyzes the sequential NAD-dependent oxidations of L-histidinol to L-histidinaldehyde and then to L-histidine. The polypeptide is Histidinol dehydrogenase (hisD) (Buchnera aphidicola subsp. Diuraphis noxia).